The following is a 553-amino-acid chain: MSEPLPPKEGEPRPQKEESQNDTLEATESKSQHITGLKLGLVVASVTFVAFLMLLDMSIIVTAIPHITSEFHSLNDVGWYGSAYLLANCALQPLAGKLYTLLGLKYTFFAFLCIFELGSVLCGAARSSTMLIVGRAVAGMGGSGLVNGALTILSTAAPKHKQPVLIGVMMGLSQIAIVCGPLLGGAFTQHATWRWCFYINLPIGAVAAFLLLVITIPDRISSTDSELSTDKPMANIKSTLRKLDLVGFVVFAAFATMISLALEWGGSTYTWRSSVIIGLFCGGGFALIAFVLWERHVGDAVAMIPGSVAGKRQVWCSCLFMGFFSGSLLVFSYYLPIYFQAVKDVSPTLSGVYMLPGILGQVIMAMVSGFAIGKTGYYLPWALGSAVLVAIGAGLVSTFQPHTSTVKWVMYQFIAGFGRGCGMQTPIIAIQSTLSPEQGALGISLAVFGQTFGGSLFLDFANLVFGSGLRTGLSKYAPTVDTQAVTAAGATGFRDVVSKNNLPGVVKAYSLAVDHTFYLAVGATACTFVFAFGMGWRKIATKNDTRAVPETDA.

Over residues 1 to 19 (MSEPLPPKEGEPRPQKEES) the composition is skewed to basic and acidic residues. Residues 1–29 (MSEPLPPKEGEPRPQKEESQNDTLEATES) form a disordered region. An N-linked (GlcNAc...) asparagine glycan is attached at Asn21. The next 13 membrane-spanning stretches (helical) occupy residues 41 to 61 (LVVA…SIIV), 77 to 96 (VGWY…PLAG), 101 to 121 (LLGL…GSVL), 136 to 156 (AVAG…LSTA), 164 to 184 (VLIG…PLLG), 196 to 216 (CFYI…VITI), 245 to 265 (LVGF…LEWG), 273 to 293 (SSVI…FVLW), 319 to 339 (LFMG…PIYF), 352 to 372 (VYML…GFAI), 376 to 396 (GYYL…AGLV), 440 to 460 (ALGI…FLDF), and 516 to 536 (TFYL…GMGW). Residue Asn543 is glycosylated (N-linked (GlcNAc...) asparagine).

This sequence belongs to the major facilitator superfamily. TCR/Tet family.

Its subcellular location is the membrane. Efflux pump; part of the gene cluster that mediates the biosynthesis of compactin, also known as mevastatin or ML-236B, and which acts as a potent competitive inhibitor of HMG-CoA reductase. This chain is Efflux pump mlcE, found in Penicillium citrinum.